We begin with the raw amino-acid sequence, 219 residues long: Ribosomal RNA small subunit methyltransferase I (219 aa).

The protein belongs to the methyltransferase superfamily. RsmI family.

The protein localises to the cytoplasm. It carries out the reaction cytidine(1402) in 16S rRNA + S-adenosyl-L-methionine = 2'-O-methylcytidine(1402) in 16S rRNA + S-adenosyl-L-homocysteine + H(+). Catalyzes the 2'-O-methylation of the ribose of cytidine 1402 (C1402) in 16S rRNA. The protein is Ribosomal RNA small subunit methyltransferase I of Coprothermobacter proteolyticus (strain ATCC 35245 / DSM 5265 / OCM 4 / BT).